A 479-amino-acid polypeptide reads, in one-letter code: FAD-dependent monooxygenase sdcF (479 aa).

The FAD-binding PCMH-type domain occupies 40–213 (AQLPPSCFVL…TLFDMEAFST (174 aa)). His-79 is subject to Pros-8alpha-FAD histidine.

It belongs to the oxygen-dependent FAD-linked oxidoreductase family. The cofactor is FAD.

It functions in the pathway secondary metabolite biosynthesis. Functionally, FAD-dependent monooxygenase; part of the gene cluster that mediates the biosynthesis of the polyenes aspernidgulenes. The carbon backbone of aspernidgulenes is synthesized by the HR-PKS sdgA, which accepts acetyl-CoA as the starter unit and performs malonyl-CoA extensions as well as regioselective methylation and reduction. The resulting nonaketide offloads the HR-PKS by intramolecular lactonization to yield the 5,6-dihydro-alpha-pyrone-containing hexaenoic acids preaspernidgulene A1 and A2. The FAD-dependent monooxygenase sdgC then installs the first epoxide on the penultimate double bond. Subsequently, the FAD-dependent monooxygenase sdgF presumably generates a ketone intermediate through Meinwald rearrangement involving a hydride shift. Next, sdgC introduces another epoxide on the last olefin of the ketone intermediate after E/Z isomerization. The epoxide hydrolase sdgD then catalyzes stereospecific cyclization of the 5,6-dihydro-alpha-pyrone and opening of the epoxide ring to form an oxygenated trimethylcyclopentanone and an oxabicyclo[2.2.1]heptane unit. Finally, the bicyclic unit undergoes hydrolytic cleavage, either spontaneously or catalyzed by sdgD, to assemble the dimethyl-gamma-lactone moiety in aspernidgulene A1. The protein is FAD-dependent monooxygenase sdcF of Emericella nidulans (strain FGSC A4 / ATCC 38163 / CBS 112.46 / NRRL 194 / M139) (Aspergillus nidulans).